Here is a 353-residue protein sequence, read N- to C-terminus: UDP-3-O-acylglucosamine N-acyltransferase (353 aa).

Residue His242 is the Proton acceptor of the active site.

The protein belongs to the transferase hexapeptide repeat family. LpxD subfamily. As to quaternary structure, homotrimer.

It carries out the reaction a UDP-3-O-[(3R)-3-hydroxyacyl]-alpha-D-glucosamine + a (3R)-hydroxyacyl-[ACP] = a UDP-2-N,3-O-bis[(3R)-3-hydroxyacyl]-alpha-D-glucosamine + holo-[ACP] + H(+). Its pathway is bacterial outer membrane biogenesis; LPS lipid A biosynthesis. Catalyzes the N-acylation of UDP-3-O-acylglucosamine using 3-hydroxyacyl-ACP as the acyl donor. Is involved in the biosynthesis of lipid A, a phosphorylated glycolipid that anchors the lipopolysaccharide to the outer membrane of the cell. The polypeptide is UDP-3-O-acylglucosamine N-acyltransferase (Pseudomonas aeruginosa (strain UCBPP-PA14)).